We begin with the raw amino-acid sequence, 134 residues long: ATP synthase epsilon chain (134 aa).

It belongs to the ATPase epsilon chain family. In terms of assembly, F-type ATPases have 2 components, CF(1) - the catalytic core - and CF(0) - the membrane proton channel. CF(1) has five subunits: alpha(3), beta(3), gamma(1), delta(1), epsilon(1). CF(0) has three main subunits: a, b and c.

The protein resides in the cell membrane. Its function is as follows. Produces ATP from ADP in the presence of a proton gradient across the membrane. The protein is ATP synthase epsilon chain of Ruminococcus albus (strain ATCC 27210 / DSM 20455 / JCM 14654 / NCDO 2250 / 7).